Consider the following 917-residue polypeptide: Major intrinsically disordered Notch2-binding receptor 1 (917 aa).

Residues 1-892 (MEANQEASLF…AEFRRAKVCK (892 aa)) are Cytoplasmic-facing. Disordered regions lie at residues 337 to 367 (STYF…WPAK), 388 to 410 (PSEE…GPDR), 461 to 483 (SCTS…QHVL), 568 to 588 (ITNG…NVHH), 652 to 687 (SEAP…CSDA), 706 to 727 (TRPS…IASI), and 746 to 783 (NEEE…LPKQ). Residues 461 to 480 (SCTSGQHSSDTSSVGTQTEQ) are compositionally biased toward polar residues. Over residues 576–588 (KGDKCNRPENVHH) the composition is skewed to basic and acidic residues. Ser-712 bears the Phosphoserine mark. Residues 893-913 (IAALITAAACTVILVIVVPIC) traverse the membrane as a helical segment. At 914 to 917 (TMKS) the chain is on the extracellular side.

The protein belongs to the MINAR family. In terms of assembly, interacts with NOTCH2; this interaction increases MINAR1 stability. Interacts (via N-terminus) with DEPTOR (via PDZ domain); this interaction may stabilize DEPTOR protein by impairing its ubiquitination. As to expression, expressed in brain and in islets of Langerhans.

The protein localises to the cell membrane. Its function is as follows. Intrinsically disordered protein which may negatively regulate mTOR signaling pathway by stabilizing the mTOR complex component DEPTOR. Negatively regulates angiogenesis. Negatively regulates cell growth. Negatively regulates neurite outgrowth in hippocampal neurons. This chain is Major intrinsically disordered Notch2-binding receptor 1 (Minar1), found in Mus musculus (Mouse).